A 326-amino-acid chain; its full sequence is Neuferricin homolog (326 aa).

Positions 1–34 are cleaved as a signal peptide; the sequence is MEKNRRKKDDAGVMTKTLAGVAALTFLVSFICSS. In terms of domain architecture, Cytochrome b5 heme-binding spans 98-197; that stretch reads KHVFTPEQLH…KEYPLVGVVA (100 aa).

This sequence belongs to the cytochrome b5 family. MAPR subfamily.

It is found in the secreted. Its function is as follows. Heme-binding protein. The chain is Neuferricin homolog from Caenorhabditis briggsae.